The primary structure comprises 962 residues: Protease 3 (962 aa).

The N-terminal stretch at 1–23 is a signal peptide; it reads MPRSTWFKALLLLVALWGPAVQA. His-88 contributes to the Zn(2+) binding site. The active-site Proton acceptor is Glu-91. Zn(2+)-binding residues include His-92 and Glu-169.

Belongs to the peptidase M16 family. Monomer. It depends on Zn(2+) as a cofactor.

Its subcellular location is the periplasm. The catalysed reaction is Preferential cleavage of 16-Tyr-|-Leu-17 and 25-Phe-|-Tyr-26 bonds of oxidized insulin B chain. Also acts on other substrates of Mw less than 7 kDa such as insulin and glucagon.. Its function is as follows. Endopeptidase that degrades small peptides of less than 7 kDa, such as glucagon and insulin. In Salmonella typhimurium (strain LT2 / SGSC1412 / ATCC 700720), this protein is Protease 3 (ptrA).